Reading from the N-terminus, the 283-residue chain is Shikimate kinase (283 aa).

86–96 (PLKSGLSSSSA) contacts ATP.

The protein belongs to the GHMP kinase family. Archaeal shikimate kinase subfamily.

It localises to the cytoplasm. The catalysed reaction is shikimate + ATP = 3-phosphoshikimate + ADP + H(+). It participates in metabolic intermediate biosynthesis; chorismate biosynthesis; chorismate from D-erythrose 4-phosphate and phosphoenolpyruvate: step 5/7. This is Shikimate kinase from Methanococcus vannielii (strain ATCC 35089 / DSM 1224 / JCM 13029 / OCM 148 / SB).